A 120-amino-acid polypeptide reads, in one-letter code: uncharacterized protein (120 aa).

The helical transmembrane segment at 47 to 63 (VSIVIGLCTVLISAGAG) threads the bilayer.

It localises to the membrane. This is an uncharacterized protein from Sinorhizobium fredii (strain NBRC 101917 / NGR234).